The primary structure comprises 328 residues: MTTLVTGATGHLGANLVRALLARGEKVRAFIRRQSDVAALDGLAVERAYGDLRDRRSIRDALEGVERLYHTAAFVSIRDGDRQELFDVNVVGTRMLMQEARRAGVRRVVHTSSFGAVGINPQGASNEHWTVSPFEPGTDYERTKAVSEHDVILEAVRGLDVTIVNPAAIVGPWDFRPSLVGRTILDFAHGRMRAFVPGAFDFVPMRDVVAVELLAMDKGIRGERYLVTGEHCTIGQILQWLEELTGHPRPRLAIPPRLMQGIALLKDPLERRFFPRRTPRFNYHSIRLLNSGKRGDSSRSRRELGLVPTSTRAAFADAVAWFRERGMI.

Belongs to the NAD(P)-dependent epimerase/dehydratase family.

It carries out the reaction a 3beta-hydroxy-4alpha-methylsteroid-4beta-carboxylate + NAD(+) = a 4alpha-methyl-3-oxosteroid + CO2 + NADH. The enzyme catalyses a 3beta-hydroxy-4alpha-methylsteroid-4beta-carboxylate + NADP(+) = a 4alpha-methyl-3-oxosteroid + CO2 + NADPH. It catalyses the reaction 4beta-carboxy-4alpha-methyl-5alpha-cholesta-8,24-dien-3beta-ol + NAD(+) = 3-dehydro-4alpha-methylzymosterol + CO2 + NADH. The catalysed reaction is 4beta-carboxy-4alpha-methyl-5alpha-cholesta-8,24-dien-3beta-ol + NADP(+) = 3-dehydro-4alpha-methylzymosterol + CO2 + NADPH. It carries out the reaction 3-dehydro-4alpha-methylzymosterol + NADPH + H(+) = 4alpha-methylzymosterol + NADP(+). It functions in the pathway steroid biosynthesis; sterol biosynthesis. In terms of biological role, participates in the biosynthesis of bacterial sterols. Together with SdmA, removes one methyl group from the C-4 position of 4,4-dimethylated steroid molecules. SdmB catalyzes an oxidative decarboxylation that results in reduction of the 3beta-hydroxy group at the C-3 carbon to an oxo group. It also functions as a ketoreductase that converts the C-3 oxo group back to a hydroxyl group after C-4 demethylation. The chain is Sterol demethylase protein B from Methylococcus capsulatus (strain ATCC 33009 / NCIMB 11132 / Bath).